The primary structure comprises 181 residues: Mannose-specific lectin (181 aa).

The signal sequence occupies residues 1–30 (MGRTTSSPKAMMRIATVAAILTILASTCMA). Residues 31 to 140 (RNVLTNGEGL…DIWSTGTYRR (110 aa)) enclose the Bulb-type lectin domain. Q56, D58, N60, Y64, W71, A72, N74, Q88, D90, N92, Y96, V103, W104, N107, N114, Q120, D122, N124, Y128, and W133 together coordinate alpha-D-mannopyranose. The cysteines at positions 59 and 83 are disulfide-linked.

Homodimer.

It localises to the secreted. Functionally, mannose-specific lectin. Shows agglutinating activity towards rabbit erythrocytes. However, it does not show agglutinating activity towards human erythrocytes. Has insecticidal activity against the cotton leafworm S.littoralis and the peach potato aphid M.persicae. Also displays antiviral activity and therefore may contribute to defense against infections. This Allium sativum (Garlic) protein is Mannose-specific lectin.